The sequence spans 368 residues: Putative alcohol dehydrogenase D (368 aa).

Residues Cys40, His61, Cys91, Cys94, Cys97, Cys105, and Cys167 each coordinate Zn(2+).

This sequence belongs to the zinc-containing alcohol dehydrogenase family. Requires Zn(2+) as cofactor.

The enzyme catalyses a primary alcohol + NAD(+) = an aldehyde + NADH + H(+). It catalyses the reaction a secondary alcohol + NAD(+) = a ketone + NADH + H(+). Its function is as follows. Required for maintaining the appropriate mycolic acid composition and permeability of the envelope on its exposure to acidic pH. The protein is Putative alcohol dehydrogenase D (adhD) of Mycobacterium tuberculosis (strain CDC 1551 / Oshkosh).